A 114-amino-acid polypeptide reads, in one-letter code: Gonadotropin subunit beta-1 (114 aa).

Positions 1–19 (MQLVLMAAVLALAEVGCFG) are cleaved as a signal peptide. Intrachain disulfides connect Cys-20-Cys-66, Cys-32-Cys-80, Cys-37-Cys-114, Cys-43-Cys-92, Cys-47-Cys-94, and Cys-97-Cys-104. N-linked (GlcNAc...) asparagine glycosylation occurs at Asn-24.

The protein belongs to the glycoprotein hormones subunit beta family. In terms of assembly, heterodimer of an alpha and a beta chain.

The protein localises to the secreted. Its function is as follows. Involved in gametogenesis and steroidogenesis. The chain is Gonadotropin subunit beta-1 (cgba) from Fundulus heteroclitus (Killifish).